Consider the following 79-residue polypeptide: Large ribosomal subunit protein bL31 (79 aa).

Zn(2+)-binding residues include Cys-16, Cys-18, Cys-37, and Cys-40.

It belongs to the bacterial ribosomal protein bL31 family. Type A subfamily. Part of the 50S ribosomal subunit. Zn(2+) serves as cofactor.

In terms of biological role, binds the 23S rRNA. This is Large ribosomal subunit protein bL31 from Coxiella burnetii (strain CbuG_Q212) (Coxiella burnetii (strain Q212)).